The chain runs to 317 residues: Melanocyte-stimulating hormone receptor (317 aa).

At 1–37 (MPMHGAQRKLLGSLNSTPTATSNLGLAANHTGAPCLE) the chain is on the extracellular side. Residue Asn29 is glycosylated (N-linked (GlcNAc...) asparagine). A helical transmembrane segment spans residues 38-63 (VSIPDGLFLSLGLVSLVENVLVVAAI). Residues 64–72 (AKNRNLHSS) are Cytoplasmic-facing. A helical membrane pass occupies residues 73-93 (MYCFICCLALSDLLVSGSNML). Residues 94-118 (ETAVILLLEAGALATRTSAMQQLHN) are Extracellular-facing. A helical membrane pass occupies residues 119 to 140 (TIDVLTCSSMLCSLCFLGAIAV). The Cytoplasmic portion of the chain corresponds to 141–163 (DRYISIFYALRYHSIMTLPRAQR). A helical transmembrane segment spans residues 164–183 (AIAAIWVASXLSSTLFITYY). Over 184 to 191 (DHAAVLLC) the chain is Extracellular. A helical transmembrane segment spans residues 192 to 211 (LVVFFLAMLVLMAVLYVHML). Over 212–240 (ARACQHAHGIIRLHKRQTPAHQGFGLRGA) the chain is Cytoplasmic. The chain crosses the membrane as a helical span at residues 241–266 (ATLTILLGIFFLCWGPFFLHLTLVVF). Topologically, residues 267 to 279 (CPQHLTCSCIFKN) are extracellular. The helical transmembrane segment at 280-300 (FKVFLTLIICNTIIDPLIYAF) threads the bilayer. Residues 301–317 (RSQELRRTLKEVLLCSW) lie on the Cytoplasmic side of the membrane. Residue Cys315 is the site of S-palmitoyl cysteine attachment.

It belongs to the G-protein coupled receptor 1 family. Interacts with MGRN1, but does not undergo MGRN1-mediated ubiquitination; this interaction competes with GNAS-binding and thus inhibits agonist-induced cAMP production. Interacts with OPN3; the interaction results in a decrease in MC1R-mediated cAMP signaling and ultimately a decrease in melanin production in melanocytes.

Its subcellular location is the cell membrane. Receptor for MSH (alpha, beta and gamma) and ACTH. The activity of this receptor is mediated by G proteins which activate adenylate cyclase. Mediates melanogenesis, the production of eumelanin (black/brown) and phaeomelanin (red/yellow), via regulation of cAMP signaling in melanocytes. This chain is Melanocyte-stimulating hormone receptor (MC1R), found in Saguinus midas (Golden-handed tamarin).